Reading from the N-terminus, the 263-residue chain is Phosphonoacetaldehyde hydrolase (263 aa).

Asp10 (nucleophile) is an active-site residue. Positions 10 and 12 each coordinate Mg(2+). The Schiff-base intermediate with substrate role is filled by Lys51. Asp184 contacts Mg(2+).

Belongs to the HAD-like hydrolase superfamily. PhnX family. Homodimer. Mg(2+) serves as cofactor.

The catalysed reaction is phosphonoacetaldehyde + H2O = acetaldehyde + phosphate + H(+). Functionally, involved in phosphonate degradation. This chain is Phosphonoacetaldehyde hydrolase, found in Bacteroides fragilis (strain ATCC 25285 / DSM 2151 / CCUG 4856 / JCM 11019 / LMG 10263 / NCTC 9343 / Onslow / VPI 2553 / EN-2).